The following is a 188-amino-acid chain: NAD(P)H-quinone oxidoreductase subunit 6, chloroplastic (188 aa).

5 helical membrane-spanning segments follow: residues 10 to 30 (GILLIIELGILLGSMGVILLN), 32 to 52 (IVQSAFSLGLTFISISLLYLV), 61 to 81 (AQVLIYVGAINVLIVFSVMLI), 97 to 117 (GNNITLIVCTSLFLFLVSIIL), and 153 to 173 (FLLPFELLSVLLLVALVGAIT).

The protein belongs to the complex I subunit 6 family. In terms of assembly, NDH is composed of at least 16 different subunits, 5 of which are encoded in the nucleus.

The protein localises to the plastid. It localises to the chloroplast thylakoid membrane. It carries out the reaction a plastoquinone + NADH + (n+1) H(+)(in) = a plastoquinol + NAD(+) + n H(+)(out). The catalysed reaction is a plastoquinone + NADPH + (n+1) H(+)(in) = a plastoquinol + NADP(+) + n H(+)(out). Its function is as follows. NDH shuttles electrons from NAD(P)H:plastoquinone, via FMN and iron-sulfur (Fe-S) centers, to quinones in the photosynthetic chain and possibly in a chloroplast respiratory chain. The immediate electron acceptor for the enzyme in this species is believed to be plastoquinone. Couples the redox reaction to proton translocation, and thus conserves the redox energy in a proton gradient. The sequence is that of NAD(P)H-quinone oxidoreductase subunit 6, chloroplastic (ndhG) from Psilotum nudum (Whisk fern).